The following is a 231-amino-acid chain: Phosphoglycolate phosphatase (231 aa).

Residue D9 is the Nucleophile of the active site. Mg(2+)-binding residues include D9 and D11. Substrate is bound at residue K154. Mg(2+) is bound by residues D177 and D181.

The protein belongs to the archaeal SPP-like hydrolase family. It depends on Mg(2+) as a cofactor.

The catalysed reaction is 2-phosphoglycolate + H2O = glycolate + phosphate. Functionally, catalyzes the dephosphorylation of 2-phosphoglycolate. In Pyrococcus furiosus (strain ATCC 43587 / DSM 3638 / JCM 8422 / Vc1), this protein is Phosphoglycolate phosphatase.